Consider the following 146-residue polypeptide: Large ribosomal subunit protein uL15 (146 aa).

The interval 1–56 is disordered; the sequence is MKLHELKAAEGANKASKRVGRGTGSGLGKTSGRGQNGQNSRSGGGVRPGFEGGQMP. Composition is skewed to gly residues over residues 21 to 35 and 42 to 52; these read RGTG…GRGQ and SGGGVRPGFEG.

This sequence belongs to the universal ribosomal protein uL15 family. In terms of assembly, part of the 50S ribosomal subunit.

Its function is as follows. Binds to the 23S rRNA. This chain is Large ribosomal subunit protein uL15, found in Clostridium botulinum (strain ATCC 19397 / Type A).